The sequence spans 1277 residues: Membrane-associated guanylate kinase, WW and PDZ domain-containing protein 2 (1277 aa).

Positions E17 to G101 constitute a PDZ domain. Residues R109–L283 form the Guanylate kinase-like domain. The interval P205 to W308 is disordered. Over residues E281 to E296 the composition is skewed to basic and acidic residues. WW domains are found at residues D302–L335 and N348–L381. The tract at residues D302–L381 is interaction with DDN. At Y362 the chain carries Phosphotyrosine. One can recognise a PDZ 1 domain in the interval S426–Y510. The segment at Q556 to D575 is disordered. A PDZ 2 domain is found at T605–G683. Phosphoserine is present on S686. Positions D778–R860 constitute a PDZ 3 domain. Y827 is subject to Phosphotyrosine. A disordered region spans residues C869–S913. Residues S884 and S885 each carry the phosphoserine modification. The segment covering A894–P908 has biased composition (low complexity). One can recognise a PDZ 4 domain in the interval D920–E1010. Over residues E1011–A1042 the composition is skewed to polar residues. A disordered region spans residues E1011–D1130. The span at N1069–I1085 shows a compositional bias: basic and acidic residues. Residues T1141–T1223 form the PDZ 5 domain.

It belongs to the MAGUK family. Interacts (via its WW domains) with DRPLA. Interacts with CTNNB1, ACVR2A, SMAD2 and SMAD3. Part of a complex consisting of MAGI2/ARIP1, ACVR2A, ACVR1B and SMAD3. May interact with HTR2A and IGSF9. Interacts with HTR4. Interacts (via guanylate kinase domain) with DLGAP1. Interacts (via PDZ domains) with GRIN2A, GRID2 and NLGN1. Interacts with CTNND2. Interacts with MAGUIN-1. Interacts (via its second PDZ domain) with PTEN (via unphosphorylated C-terminus); this interaction diminishes the degradation rate of PTEN. Found in a complex, at least composed of KIDINS220, MAGI2, NTRK1 and RAPGEF2; the complex is mainly formed at late endosomes in a NGF-dependent manner. Interacts with RAPGEF2; the interaction occurs before or after nerve growth factor (NGF) stimulation. Isoform 1 interacts (via PDZ domain) with KIDINS220 isoform 2 (via C-terminal domain). Interacts with DDN. Identified in a complex with ACTN4, CASK, IQGAP1, NPHS1, SPTAN1 and SPTBN1. Interacts with DLL1. Found in a complex with IGSF9B and NLGN2; the interaction with IGSF9B is mediated via the PDZ 5 and PDZ 6 domains, while the interaction with NLGN2 is mediated via the WW1, WW2 and PDZ2 domains. Interacts (via PDZ 6 domain) with USH1G (via SAM domain); the interaction is triggered by phosphorylation of USH1G by CK2 and negatively regulates MAGI2-mediated endocytosis. Expressed in the foot process layer of podocytes of the kidney glomeruli but not in tubules (at protein level). Expressed in the brain.

Its subcellular location is the cytoplasm. The protein resides in the late endosome. The protein localises to the synapse. It localises to the synaptosome. It is found in the cell membrane. Its subcellular location is the cytoskeleton. The protein resides in the microtubule organizing center. The protein localises to the centrosome. It localises to the cell projection. It is found in the cilium. Its subcellular location is the centriole. The protein resides in the photoreceptor inner segment. The protein localises to the photoreceptor outer segment. Functionally, seems to act as scaffold molecule at synaptic junctions by assembling neurotransmitter receptors and cell adhesion proteins. Plays a role in nerve growth factor (NGF)-induced recruitment of RAPGEF2 to late endosomes and neurite outgrowth. May play a role in regulating activin-mediated signaling in neuronal cells. Enhances the ability of PTEN to suppress AKT1 activation. Plays a role in receptor-mediated clathrin-dependent endocytosis which is required for ciliogenesis. This is Membrane-associated guanylate kinase, WW and PDZ domain-containing protein 2 (Magi2) from Rattus norvegicus (Rat).